Consider the following 190-residue polypeptide: Potassium-transporting ATPase KdpC subunit (190 aa).

A helical transmembrane segment spans residues Val10 to Ile30.

This sequence belongs to the KdpC family. The system is composed of three essential subunits: KdpA, KdpB and KdpC.

Its subcellular location is the cell inner membrane. Its function is as follows. Part of the high-affinity ATP-driven potassium transport (or Kdp) system, which catalyzes the hydrolysis of ATP coupled with the electrogenic transport of potassium into the cytoplasm. This subunit acts as a catalytic chaperone that increases the ATP-binding affinity of the ATP-hydrolyzing subunit KdpB by the formation of a transient KdpB/KdpC/ATP ternary complex. The sequence is that of Potassium-transporting ATPase KdpC subunit from Sorangium cellulosum (strain So ce56) (Polyangium cellulosum (strain So ce56)).